The following is a 269-amino-acid chain: UPF0328 protein ECU03_0020 (269 aa).

This sequence belongs to the UPF0328 family.

This is UPF0328 protein ECU03_0020 from Encephalitozoon cuniculi (strain GB-M1) (Microsporidian parasite).